A 540-amino-acid chain; its full sequence is Putative cysteine ligase BshC (540 aa).

The stretch at 425–453 (IEKVEGMIEQQRRLNKDLLDEVAGNQNNI) forms a coiled coil.

The protein belongs to the BshC family.

Its function is as follows. Involved in bacillithiol (BSH) biosynthesis. May catalyze the last step of the pathway, the addition of cysteine to glucosamine malate (GlcN-Mal) to generate BSH. The chain is Putative cysteine ligase BshC from Staphylococcus aureus (strain NCTC 8325 / PS 47).